Reading from the N-terminus, the 207-residue chain is MKLRGLYAITDSQLLAGRFLSHVEAALEGGVCLLQYRDKTDDAARRLREAEGLMKLCERYGTQLLINDDAELAARLGVGVHLGQTDGPLTPARALLGRQAIIGSTCHASLELAAQAASEGASYVAFGRFFNSVTKPGAPAANVGLLEQARAQVKLPIAVIGGITLDNAAPLVAHGADLLAVIHGLFGADSAQEVTRRARAFNALFAS.

4-amino-2-methyl-5-(diphosphooxymethyl)pyrimidine-binding positions include glutamine 35–lysine 39 and asparagine 67. Mg(2+) contacts are provided by aspartate 68 and aspartate 86. Threonine 105 contributes to the 4-amino-2-methyl-5-(diphosphooxymethyl)pyrimidine binding site. Serine 132 to threonine 134 contributes to the 2-[(2R,5Z)-2-carboxy-4-methylthiazol-5(2H)-ylidene]ethyl phosphate binding site. Lysine 135 contributes to the 4-amino-2-methyl-5-(diphosphooxymethyl)pyrimidine binding site. Glycine 162 provides a ligand contact to 2-[(2R,5Z)-2-carboxy-4-methylthiazol-5(2H)-ylidene]ethyl phosphate.

It belongs to the thiamine-phosphate synthase family. The cofactor is Mg(2+).

It carries out the reaction 2-[(2R,5Z)-2-carboxy-4-methylthiazol-5(2H)-ylidene]ethyl phosphate + 4-amino-2-methyl-5-(diphosphooxymethyl)pyrimidine + 2 H(+) = thiamine phosphate + CO2 + diphosphate. The catalysed reaction is 2-(2-carboxy-4-methylthiazol-5-yl)ethyl phosphate + 4-amino-2-methyl-5-(diphosphooxymethyl)pyrimidine + 2 H(+) = thiamine phosphate + CO2 + diphosphate. The enzyme catalyses 4-methyl-5-(2-phosphooxyethyl)-thiazole + 4-amino-2-methyl-5-(diphosphooxymethyl)pyrimidine + H(+) = thiamine phosphate + diphosphate. The protein operates within cofactor biosynthesis; thiamine diphosphate biosynthesis; thiamine phosphate from 4-amino-2-methyl-5-diphosphomethylpyrimidine and 4-methyl-5-(2-phosphoethyl)-thiazole: step 1/1. Functionally, condenses 4-methyl-5-(beta-hydroxyethyl)thiazole monophosphate (THZ-P) and 2-methyl-4-amino-5-hydroxymethyl pyrimidine pyrophosphate (HMP-PP) to form thiamine monophosphate (TMP). The chain is Thiamine-phosphate synthase from Pseudomonas putida (strain ATCC 47054 / DSM 6125 / CFBP 8728 / NCIMB 11950 / KT2440).